Reading from the N-terminus, the 565-residue chain is CTP synthase (565 aa).

The segment at 1 to 268 (MQTKYIFVTG…GELVVDRFYP (268 aa)) is amidoligase domain. Ser14 provides a ligand contact to CTP. Ser14 contributes to the UTP binding site. 15-20 (SLGKGI) provides a ligand contact to ATP. Residue Tyr55 coordinates L-glutamine. Asp72 contributes to the ATP binding site. The Mg(2+) site is built by Asp72 and Glu142. CTP is bound by residues 149-151 (DIE), 189-194 (KTKPTQ), and Lys225. Residues 189-194 (KTKPTQ) and Lys225 contribute to the UTP site. The 243-residue stretch at 301–543 (PIALVGKYVE…VRACTAYAHE (243 aa)) folds into the Glutamine amidotransferase type-1 domain. Residue Gly363 participates in L-glutamine binding. Catalysis depends on Cys390, which acts as the Nucleophile; for glutamine hydrolysis. L-glutamine is bound by residues 391-394 (LGLQ), Glu414, and Arg471. Residues His516 and Glu518 contribute to the active site. Positions 545–565 (DLVTSPQPPERKAVPLASVDM) are disordered.

The protein belongs to the CTP synthase family. Homotetramer.

It catalyses the reaction UTP + L-glutamine + ATP + H2O = CTP + L-glutamate + ADP + phosphate + 2 H(+). The catalysed reaction is L-glutamine + H2O = L-glutamate + NH4(+). The enzyme catalyses UTP + NH4(+) + ATP = CTP + ADP + phosphate + 2 H(+). It participates in pyrimidine metabolism; CTP biosynthesis via de novo pathway; CTP from UDP: step 2/2. Allosterically activated by GTP, when glutamine is the substrate; GTP has no effect on the reaction when ammonia is the substrate. The allosteric effector GTP functions by stabilizing the protein conformation that binds the tetrahedral intermediate(s) formed during glutamine hydrolysis. Inhibited by the product CTP, via allosteric rather than competitive inhibition. Functionally, catalyzes the ATP-dependent amination of UTP to CTP with either L-glutamine or ammonia as the source of nitrogen. Regulates intracellular CTP levels through interactions with the four ribonucleotide triphosphates. The protein is CTP synthase of Salinibacter ruber (strain DSM 13855 / M31).